Reading from the N-terminus, the 485-residue chain is Adenosylhomocysteinase (485 aa).

Substrate is bound by residues Thr-60, Asp-146, and Glu-208. 209–211 is an NAD(+) binding site; sequence TTT. Positions 238 and 242 each coordinate substrate. Residues Asn-243, 272–277, Glu-295, Asn-330, 351–353, and Asn-399 contribute to the NAD(+) site; these read GYGDVG and IGH.

Belongs to the adenosylhomocysteinase family. NAD(+) is required as a cofactor.

The protein resides in the cytoplasm. It carries out the reaction S-adenosyl-L-homocysteine + H2O = L-homocysteine + adenosine. It functions in the pathway amino-acid biosynthesis; L-homocysteine biosynthesis; L-homocysteine from S-adenosyl-L-homocysteine: step 1/1. Its function is as follows. May play a key role in the regulation of the intracellular concentration of adenosylhomocysteine. The protein is Adenosylhomocysteinase of Streptomyces griseus subsp. griseus (strain JCM 4626 / CBS 651.72 / NBRC 13350 / KCC S-0626 / ISP 5235).